A 122-amino-acid chain; its full sequence is Large ribosomal subunit protein uL14 (122 aa).

It belongs to the universal ribosomal protein uL14 family. As to quaternary structure, part of the 50S ribosomal subunit. Forms a cluster with proteins L3 and L19. In the 70S ribosome, L14 and L19 interact and together make contacts with the 16S rRNA in bridges B5 and B8.

In terms of biological role, binds to 23S rRNA. Forms part of two intersubunit bridges in the 70S ribosome. This chain is Large ribosomal subunit protein uL14, found in Vesicomyosocius okutanii subsp. Calyptogena okutanii (strain HA).